We begin with the raw amino-acid sequence, 76 residues long: Translational regulator CsrA (76 aa).

Belongs to the CsrA/RsmA family. As to quaternary structure, homodimer; the beta-strands of each monomer intercalate to form a hydrophobic core, while the alpha-helices form wings that extend away from the core.

The protein localises to the cytoplasm. Functionally, a translational regulator that binds mRNA to regulate translation initiation and/or mRNA stability. Usually binds in the 5'-UTR at or near the Shine-Dalgarno sequence preventing ribosome-binding, thus repressing translation. Its main target seems to be the major flagellin gene, while its function is anatagonized by FliW. The sequence is that of Translational regulator CsrA from Wolinella succinogenes (strain ATCC 29543 / DSM 1740 / CCUG 13145 / JCM 31913 / LMG 7466 / NCTC 11488 / FDC 602W) (Vibrio succinogenes).